We begin with the raw amino-acid sequence, 42 residues long: Photosystem I reaction center subunit IX (42 aa).

Residues 8-28 (YLSTAPVLFTVWLSFTASFII) form a helical membrane-spanning segment.

The protein belongs to the PsaJ family.

The protein resides in the plastid. The protein localises to the chloroplast thylakoid membrane. Its function is as follows. May help in the organization of the PsaE and PsaF subunits. The protein is Photosystem I reaction center subunit IX of Rhodomonas salina (Cryptomonas salina).